The following is an 86-amino-acid chain: Cell division topological specificity factor (86 aa).

It belongs to the MinE family.

Functionally, prevents the cell division inhibition by proteins MinC and MinD at internal division sites while permitting inhibition at polar sites. This ensures cell division at the proper site by restricting the formation of a division septum at the midpoint of the long axis of the cell. This Alteromonas mediterranea (strain DSM 17117 / CIP 110805 / LMG 28347 / Deep ecotype) protein is Cell division topological specificity factor.